Reading from the N-terminus, the 240-residue chain is Uridylate kinase (240 aa).

12 to 15 (KLSG) contributes to the ATP binding site. The interval 20–25 (GEQGFG) is involved in allosteric activation by GTP. Gly54 lines the UMP pocket. The ATP site is built by Gly55 and Arg59. Residues Asp74 and 135–142 (TGNPYFST) contribute to the UMP site. ATP contacts are provided by Asn163, Tyr169, and Asp172.

This sequence belongs to the UMP kinase family. Homohexamer.

It is found in the cytoplasm. The enzyme catalyses UMP + ATP = UDP + ADP. Its pathway is pyrimidine metabolism; CTP biosynthesis via de novo pathway; UDP from UMP (UMPK route): step 1/1. Allosterically activated by GTP. Inhibited by UTP. Functionally, catalyzes the reversible phosphorylation of UMP to UDP. The protein is Uridylate kinase of Bacillus cereus (strain ATCC 14579 / DSM 31 / CCUG 7414 / JCM 2152 / NBRC 15305 / NCIMB 9373 / NCTC 2599 / NRRL B-3711).